The primary structure comprises 140 residues: Transcription antitermination protein NusB (140 aa).

Belongs to the NusB family.

In terms of biological role, involved in transcription antitermination. Required for transcription of ribosomal RNA (rRNA) genes. Binds specifically to the boxA antiterminator sequence of the ribosomal RNA (rrn) operons. This chain is Transcription antitermination protein NusB, found in Thermoanaerobacter pseudethanolicus (strain ATCC 33223 / 39E) (Clostridium thermohydrosulfuricum).